The chain runs to 173 residues: Photosystem I assembly protein Ycf3 (173 aa).

TPR repeat units follow at residues 35–68 (AFSY…EEDP), 72–105 (SYIL…NFKL), and 120–153 (GVQA…APDN).

This sequence belongs to the Ycf3 family.

The protein localises to the plastid. Its subcellular location is the chloroplast thylakoid membrane. In terms of biological role, essential for the assembly of the photosystem I (PSI) complex. May act as a chaperone-like factor to guide the assembly of the PSI subunits. This Pyropia yezoensis (Susabi-nori) protein is Photosystem I assembly protein Ycf3.